Reading from the N-terminus, the 134-residue chain is Profilin-1 (134 aa).

A disulfide bridge connects residues C13 and C118. Residues 84-100 (AVVRGKKGSGGITIKKT) carry the Involved in PIP2 interaction motif. T114 bears the Phosphothreonine mark.

This sequence belongs to the profilin family. As to quaternary structure, occurs in many kinds of cells as a complex with monomeric actin in a 1:1 ratio. Post-translationally, phosphorylated by MAP kinases.

It is found in the cytoplasm. The protein resides in the cytoskeleton. Its function is as follows. Binds to actin and affects the structure of the cytoskeleton. At high concentrations, profilin prevents the polymerization of actin, whereas it enhances it at low concentrations. The chain is Profilin-1 from Olea europaea (Common olive).